A 512-amino-acid chain; its full sequence is Protein disulfide-isomerase (512 aa).

The first 24 residues, 1–24, serve as a signal peptide directing secretion; sequence MAKNVAIFGLLFSLLLLVPSQIFA. The 120-residue stretch at 25 to 144 folds into the Thioredoxin 1 domain; that stretch reads EESSTDAKEF…IVEYLKKQSG (120 aa). Active-site nucleophile residues include cysteine 62 and cysteine 65. The cysteines at positions 62 and 65 are disulfide-linked. The N-linked (GlcNAc...) asparagine glycan is linked to asparagine 278. Residues 357 to 485 form the Thioredoxin 2 domain; sequence YKDGKVEPFV…IIEFIEKNKD (129 aa). Catalysis depends on nucleophile residues cysteine 407 and cysteine 410. A disulfide bridge connects residues cysteine 407 and cysteine 410. The segment covering 487 to 496 has biased composition (basic and acidic residues); it reads TGAAHQEVEQ. The disordered stretch occupies residues 487–512; it reads TGAAHQEVEQPKAAAQPEAEQPKDEL. The Prevents secretion from ER signature appears at 509–512; that stretch reads KDEL.

Belongs to the protein disulfide isomerase family.

It localises to the endoplasmic reticulum lumen. It carries out the reaction Catalyzes the rearrangement of -S-S- bonds in proteins.. Its function is as follows. Participates in the folding of proteins containing disulfide bonds, may be involved in glycosylation, prolyl hydroxylation and triglyceride transfer. The chain is Protein disulfide-isomerase (PDI) from Medicago sativa (Alfalfa).